The following is a 1411-amino-acid chain: Protein RhsB (1411 aa).

28 consecutive repeat copies span residues 330–352 (GKQV…HRHT), 353–374 (GRPE…LNPA), 375–417 (GLSY…EHAD), 418–438 (GSVT…TDAA), 439–460 (GRTT…TTPD), 461–481 (GRAS…TGPD), 482–502 (GLEL…TAPD), 503–525 (GDIT…EDAT), 526–546 (GSRK…TDCS), 547–567 (GYVT…HREE), 568–588 (GLSQ…KDTQ), 589–609 (GHET…IAPD), 610–629 (GSRN…TTQG), 630–650 (GLTR…TSEN), 651–671 (GSHT…TGFD), 672–691 (GRTQ…SEDE), 692–711 (GLVT…RTVK), 712–734 (GETA…HISE), 735–758 (GHRV…QTVH), 808–828 (GDTP…LRSF), 829–850 (GRYE…HLNS), 851–871 (LLSD…ISSP), 872–894 (RQTR…TAAN), 895–930 (LDIR…NRIA), 931–959 (RDAH…VIRT), 960–984 (DDER…TQYE), 985–1019 (EPLV…MSLS), and 1162–1186 (GATA…HQLQ). Positions 330 to 1186 (GKQVRSFTYD…LNEENPHQLQ (857 aa)) are 28 X approximate tandem repeats.

The protein belongs to the RHS family.

Its function is as follows. Rhs elements have a nonessential function. They may play an important role in the natural ecology of the cell. The protein is Protein RhsB (rhsB) of Escherichia coli (strain K12).